We begin with the raw amino-acid sequence, 219 residues long: 3,4-dihydroxy-2-butanone 4-phosphate synthase (219 aa).

D-ribulose 5-phosphate is bound by residues 37 to 38, aspartate 42, 150 to 154, and glutamate 174; these read RE and RRGHT. Mg(2+) is bound at residue glutamate 38. A Mg(2+)-binding site is contributed by histidine 153.

This sequence belongs to the DHBP synthase family. As to quaternary structure, homodimer. It depends on Mg(2+) as a cofactor. Requires Mn(2+) as cofactor.

The enzyme catalyses D-ribulose 5-phosphate = (2S)-2-hydroxy-3-oxobutyl phosphate + formate + H(+). The protein operates within cofactor biosynthesis; riboflavin biosynthesis; 2-hydroxy-3-oxobutyl phosphate from D-ribulose 5-phosphate: step 1/1. Functionally, catalyzes the conversion of D-ribulose 5-phosphate to formate and 3,4-dihydroxy-2-butanone 4-phosphate. The protein is 3,4-dihydroxy-2-butanone 4-phosphate synthase of Edwardsiella ictaluri (strain 93-146).